The following is a 609-amino-acid chain: Protein tesmin/TSO1-like CXC 3 (609 aa).

Residues 69-84 show a composition bias toward basic and acidic residues; sequence ESRFRSQKDVSASKEV. Disordered regions lie at residues 69 to 102, 307 to 328, 457 to 477, and 569 to 609; these read ESRF…YKND, PISP…SSCK, LFEQ…KTQQ, and NSKR…TPHH. The 126-residue stretch at 326–451 folds into the CRC domain; it reads SCKRCNCKKS…RCEGCKNAFG (126 aa). A compositionally biased stretch (polar residues) spans 466–477; that stretch reads TSGTPGTKKTQQ.

This sequence belongs to the lin-54 family. Ubiquitous but expressed mostly in flowers and at significant levels in leaves. Detected with highest levels in developing ovules and microspores, and in petals.

The protein resides in the nucleus. Its function is as follows. Plays a role in development of both male and female reproductive tissues. This is Protein tesmin/TSO1-like CXC 3 (TCX3) from Arabidopsis thaliana (Mouse-ear cress).